A 168-amino-acid polypeptide reads, in one-letter code: Photosystem I assembly protein Ycf3 (168 aa).

TPR repeat units follow at residues A35–P68, S72–L105, and G120–N153.

Belongs to the Ycf3 family.

The protein localises to the plastid. Its subcellular location is the chloroplast thylakoid membrane. In terms of biological role, essential for the assembly of the photosystem I (PSI) complex. May act as a chaperone-like factor to guide the assembly of the PSI subunits. This Buxus microphylla (Littleleaf boxwood) protein is Photosystem I assembly protein Ycf3.